Here is an 860-residue protein sequence, read N- to C-terminus: MRKDVTPMMRQYLNIKDKHKDAILFFRVGSFYEMFFDDALEGSKLLGLTLTKRENVPMCGVPCHTSKDYIKKLILLDKKVAICEQGLQTDPKGPLEREVVEVISPGVVIDEDFLQDDINNYLIAISDYKDYYSFSYIDLSTSRLGIILYEGNFLEKLRRDIEKYSPKEIIVSEDFYYEYLEKLALDRFLVNKIPHWHFDKEIAMKSLKEHFNVLSLSALGFKEDEPYYVSSFLIIDYIKNNLKNLLINIDTIHINNDSEYMFLDDVTQINLELVKNNNDLTSCYSLYSVLNDCKTPMGKRLLREYILNPLLDIVAINNRLDHVEFLNNNINLSMKLRDILSNVWDIERIISRLQMKKYVKKDFLLIKESLTAFFLAKRLLNEHSFSYWIFDVNDENNIREIYSLIDCSISKEPDELIQHGYNFEIDRLREIKNNASKYVDDYLNFERNFSKISSLKIRRINVRGLFFEVTKSYYGQVPSHFIESQTLNSVKRYKTNKLIELERDINDAEDNLLALEQEVFDDIASKIVKHSVVIKKIANFFAYVDVVSDFAYLAKKNEYVRPTLTNNKEIILECSRHPVVEHYMKGVEAFTKNSVKIDNDKYFCLITGPNMAGKSTYLRQTALVVLMGHIGSFVPANQAIIGITDKIFCRIGASDNISKGESTFLVEMNETANILRNATQNSLIIMDEVGRGTSTNDGLAIAYSIVEYILEHIQARSLFATHFHELSAIKHDSFVNLSMKIERQGDELIFLREVEEKPSLNSYGIYVARIAGIPLKVIERANVILKSLTSREHLYVPEFFTSATLVINDGEEAMKEDLSYELELNDYLELKNFISKIDVNNITPFQAMNLLSEIILKTKT.

608 to 615 (GPNMAGKS) contacts ATP.

This sequence belongs to the DNA mismatch repair MutS family.

Functionally, this protein is involved in the repair of mismatches in DNA. It is possible that it carries out the mismatch recognition step. This protein has a weak ATPase activity. The chain is DNA mismatch repair protein MutS from Borrelia turicatae (strain 91E135).